We begin with the raw amino-acid sequence, 74 residues long: Small integral membrane protein 15 (74 aa).

Residues 20-40 traverse the membrane as a helical segment; it reads YGFLTTVILVLTPLFIISAAL. A coiled-coil region spans residues 48–74; the sequence is IETREREQKKKRKRQENIVKAKRAKKD. The segment at 53-74 is disordered; that stretch reads REQKKKRKRQENIVKAKRAKKD. A compositionally biased stretch (basic residues) spans 56 to 74; it reads KKKRKRQENIVKAKRAKKD.

The protein belongs to the SMIM15 family.

It is found in the membrane. The polypeptide is Small integral membrane protein 15 (SMIM15) (Gallus gallus (Chicken)).